We begin with the raw amino-acid sequence, 332 residues long: Ketol-acid reductoisomerase (NADP(+)) (332 aa).

Residues Met1 to Thr182 enclose the KARI N-terminal Rossmann domain. NADP(+)-binding positions include Tyr25 to Gln28 and Asp83 to Gln86. His108 is an active-site residue. Position 134 (Gly134) interacts with NADP(+). The KARI C-terminal knotted domain occupies Thr183 to Leu328. 4 residues coordinate Mg(2+): Asp191, Glu195, Glu227, and Glu231. Substrate is bound at residue Ser252.

The protein belongs to the ketol-acid reductoisomerase family. Mg(2+) is required as a cofactor.

The enzyme catalyses (2R)-2,3-dihydroxy-3-methylbutanoate + NADP(+) = (2S)-2-acetolactate + NADPH + H(+). It carries out the reaction (2R,3R)-2,3-dihydroxy-3-methylpentanoate + NADP(+) = (S)-2-ethyl-2-hydroxy-3-oxobutanoate + NADPH + H(+). It participates in amino-acid biosynthesis; L-isoleucine biosynthesis; L-isoleucine from 2-oxobutanoate: step 2/4. The protein operates within amino-acid biosynthesis; L-valine biosynthesis; L-valine from pyruvate: step 2/4. Functionally, involved in the biosynthesis of branched-chain amino acids (BCAA). Catalyzes an alkyl-migration followed by a ketol-acid reduction of (S)-2-acetolactate (S2AL) to yield (R)-2,3-dihydroxy-isovalerate. In the isomerase reaction, S2AL is rearranged via a Mg-dependent methyl migration to produce 3-hydroxy-3-methyl-2-ketobutyrate (HMKB). In the reductase reaction, this 2-ketoacid undergoes a metal-dependent reduction by NADPH to yield (R)-2,3-dihydroxy-isovalerate. The chain is Ketol-acid reductoisomerase (NADP(+)) from Dehalococcoides mccartyi (strain ATCC BAA-2266 / KCTC 15142 / 195) (Dehalococcoides ethenogenes (strain 195)).